The following is a 423-amino-acid chain: MASFPDCVNENEIGKAKFIGELIPPVAPFDQKSGRETWTVAFAPDGSYFAWSQGHRIVRLVPWKKCLASFSVRKEDRSSGAGPRRLSRQNSEGSLLPGEPREHTIDCGDIVWGLAFGSSVPEKQSRCVNIEWHRFKFGQDQLLLATGLNNGRIKIWDVYTGKLLLNLMDHTDIVRDLTFAPDGSLVLVSASRDKTLRVWDLKDDGNMVKVLRGHQNWVYCSAFSPDSSVLCSVGAGKAVFLWDMDKYTLIRKLEGHHNDVVCCEFSPDGALLATASYDTRVIVWDPHTATVLLELGHLFPPPSPIFAGGANDRWVRSVAFCHDGRHIASVTDDRLVRFWSIDEKSPQAIGPLTNGLCCAFSTDGSVLSAGSRDGSVHFWASPRSIASLQHLCRMTLRRVMPTQQVYTLPIPFSMQDYLAYKTL.

The interval 76-100 is disordered; that stretch reads DRSSGAGPRRLSRQNSEGSLLPGEP. WD repeat units lie at residues 125 to 166, 169 to 209, 213 to 252, 255 to 294, and 310 to 347; these read SRCV…LLLN, DHTD…NMVK, GHQNWVYCSAFSPDSSVLCSVGAGKAVFLWDMDKYTLIRK, GHHNDVVCCEFSPDGALLATASYDTRVIVWDPHTATVLLE, and ANDRWVRSVAFCHDGRHIASVTDDRLVRFWSIDEKSPQ. Positions 373 to 423 constitute an SOCS box domain; sequence DGSVHFWASPRSIASLQHLCRMTLRRVMPTQQVYTLPIPFSMQDYLAYKTL.

In terms of assembly, component of a probable ECS E3 ubiquitin-protein ligase complex that contains the Elongin BC complex.

The protein operates within protein modification; protein ubiquitination. Probable substrate-recognition component of a SCF-like ECS (Elongin-Cullin-SOCS-box protein) E3 ubiquitin-protein ligase complex which mediates the ubiquitination and subsequent proteasomal degradation of target proteins. The protein is WD repeat and SOCS box-containing protein 1 (wsb1) of Danio rerio (Zebrafish).